The chain runs to 35 residues: U1-segestritoxin-Sf1a (35 aa).

2 disulfides stabilise this stretch: cysteine 10–cysteine 22 and cysteine 17–cysteine 28. Residues 31-33 (DPW) are keys region for toxin activity.

It belongs to the neurotoxin 16 (SFI) family. As to expression, expressed by the venom gland.

Its subcellular location is the secreted. Insecticidal toxin. The polypeptide is U1-segestritoxin-Sf1a (Segestria florentina (Tube-web spider)).